Reading from the N-terminus, the 397-residue chain is Tryptophan synthase beta chain (397 aa).

Lysine 86 carries the N6-(pyridoxal phosphate)lysine modification.

The protein belongs to the TrpB family. Tetramer of two alpha and two beta chains. It depends on pyridoxal 5'-phosphate as a cofactor.

It catalyses the reaction (1S,2R)-1-C-(indol-3-yl)glycerol 3-phosphate + L-serine = D-glyceraldehyde 3-phosphate + L-tryptophan + H2O. It functions in the pathway amino-acid biosynthesis; L-tryptophan biosynthesis; L-tryptophan from chorismate: step 5/5. Functionally, the beta subunit is responsible for the synthesis of L-tryptophan from indole and L-serine. The protein is Tryptophan synthase beta chain of Edwardsiella ictaluri (strain 93-146).